A 258-amino-acid polypeptide reads, in one-letter code: 5'-nucleotidase SurE (258 aa).

The a divalent metal cation site is built by Asp-16, Asp-17, Ser-47, and Asn-99.

It belongs to the SurE nucleotidase family. The cofactor is a divalent metal cation.

Its subcellular location is the cytoplasm. The enzyme catalyses a ribonucleoside 5'-phosphate + H2O = a ribonucleoside + phosphate. In terms of biological role, nucleotidase that shows phosphatase activity on nucleoside 5'-monophosphates. This is 5'-nucleotidase SurE from Coxiella burnetii (strain Dugway 5J108-111).